A 262-amino-acid chain; its full sequence is Short-chain Z-isoprenyl diphosphate synthase (262 aa).

Asp40 is an active-site residue. Mg(2+) is bound at residue Asp40. Residues 41–44 (GNRR), Trp45, and 86–88 (STE) contribute to the substrate site. Residue Asn89 is the Proton acceptor of the active site. Substrate-binding positions include Arg92, Arg211, and 217-219 (RLS). Position 230 (Glu230) interacts with Mg(2+).

It belongs to the UPP synthase family. Z-FPP synthase subfamily. It depends on Mg(2+) as a cofactor.

It catalyses the reaction isopentenyl diphosphate + (2E)-geranyl diphosphate = (2Z,6E)-farnesyl diphosphate + diphosphate. Its pathway is phospholipid metabolism; decaprenyl phosphate biosynthesis. Generates Z-farnesyl diphosphate (Z-FPP) from isopentenyl pyrophosphate (IPP). Z-FPP is the precursor of decaprenyl diphosphate, which has a central role in the biosynthesis of the mycobacterial cell wall. In Mycobacterium leprae (strain TN), this protein is Short-chain Z-isoprenyl diphosphate synthase.